Reading from the N-terminus, the 281-residue chain is Pantothenate synthetase (281 aa).

ATP is bound at residue 31-38 (MGNLHAGH). His-38 (proton donor) is an active-site residue. Gln-62 contacts (R)-pantoate. Gln-62 is a binding site for beta-alanine. Residue 150-153 (GKKD) coordinates ATP. Gln-156 is a (R)-pantoate binding site. Residues Val-179 and 187–190 (MSSR) contribute to the ATP site.

Belongs to the pantothenate synthetase family. In terms of assembly, homodimer.

Its subcellular location is the cytoplasm. The enzyme catalyses (R)-pantoate + beta-alanine + ATP = (R)-pantothenate + AMP + diphosphate + H(+). The protein operates within cofactor biosynthesis; (R)-pantothenate biosynthesis; (R)-pantothenate from (R)-pantoate and beta-alanine: step 1/1. Its function is as follows. Catalyzes the condensation of pantoate with beta-alanine in an ATP-dependent reaction via a pantoyl-adenylate intermediate. The polypeptide is Pantothenate synthetase (Xylella fastidiosa (strain M12)).